We begin with the raw amino-acid sequence, 471 residues long: Glutamate--tRNA ligase (471 aa).

The short motif at 9–19 (PSPTGYLHVGG) is the 'HIGH' region element. Zn(2+) contacts are provided by Cys98, Cys100, Cys125, and His127. A 'KMSKS' region motif is present at residues 237 to 241 (KLSKR). Lys240 is an ATP binding site.

The protein belongs to the class-I aminoacyl-tRNA synthetase family. Glutamate--tRNA ligase type 1 subfamily. Monomer. Zn(2+) is required as a cofactor.

Its subcellular location is the cytoplasm. It carries out the reaction tRNA(Glu) + L-glutamate + ATP = L-glutamyl-tRNA(Glu) + AMP + diphosphate. Functionally, catalyzes the attachment of glutamate to tRNA(Glu) in a two-step reaction: glutamate is first activated by ATP to form Glu-AMP and then transferred to the acceptor end of tRNA(Glu). The chain is Glutamate--tRNA ligase from Salmonella gallinarum (strain 287/91 / NCTC 13346).